The primary structure comprises 134 residues: MAKAVALLLAAIAASAVLVQVECDAPVEKSFNKALLAPVDKRLDEATQAINEAADSVVAAAPPAKKDEVEAATWKRRMFAFAALGMAQGDEKKVAATSLAYKKAAKAVLDAAPADKFKLMDESFKVAAMEVIVS.

The first 16 residues, 1–16, serve as a signal peptide directing secretion; sequence MAKAVALLLAAIAASA.

This is an uncharacterized protein from Oryza sativa subsp. indica (Rice).